The following is a 626-amino-acid chain: Coilin (626 aa).

A phosphoserine mark is found at Ser148 and Ser162. 2 disordered regions span residues 253–309 (LTSQ…ISSN) and 382–433 (RGCE…NKKS). The span at 260–292 (STPSESDSSSSESSSSVSDSSDLSSTSDSSSGD) shows a compositional bias: low complexity. Over residues 382-395 (RGCENTEKPSEEGK) the composition is skewed to basic and acidic residues. The span at 396-417 (NFTTPLSDSVESENTWSNTLRS) shows a compositional bias: polar residues.

Belongs to the coilin family. As to quaternary structure, interacts with tgs1; both proteins are required to maintain Cajal body integrity. Interacts with U2 and U5 snRNAs.

Its subcellular location is the cytoplasm. It localises to the nucleus. The protein resides in the cajal body. Functionally, component of nuclear coiled bodies, also known as Cajal bodies or CBs, which are involved in the modification and assembly of nucleoplasmic snRNPs. Required for proper pre-mRNA splicing. This is Coilin from Schizosaccharomyces pombe (strain 972 / ATCC 24843) (Fission yeast).